The chain runs to 168 residues: uncharacterized protein (168 aa).

A mitochondrion-targeting transit peptide spans 1 to 29 (MGWRFPSPSPRQASPVAPLLAAPTAVRSC). The segment covering 98–110 (GETKARRAREEGK) has biased composition (basic and acidic residues). The interval 98 to 152 (GETKARRAREEGKLPSLGNAPAPRRRSVAWPAAEGSCAAPESSPPASEASLPAPE) is disordered. The segment covering 128 to 152 (PAAEGSCAAPESSPPASEASLPAPE) has biased composition (low complexity).

The protein resides in the mitochondrion. This is an uncharacterized protein from Homo sapiens (Human).